The chain runs to 351 residues: 3-dehydroquinate synthase (351 aa).

Residues 60–65 (DGEEYK), 94–98 (GVISD), 118–119 (TT), K131, K140, and 158–161 (FLKT) each bind NAD(+). 3 residues coordinate Zn(2+): E173, H239, and H256.

Belongs to the sugar phosphate cyclases superfamily. Dehydroquinate synthase family. Requires Co(2+) as cofactor. Zn(2+) serves as cofactor. NAD(+) is required as a cofactor.

Its subcellular location is the cytoplasm. It carries out the reaction 7-phospho-2-dehydro-3-deoxy-D-arabino-heptonate = 3-dehydroquinate + phosphate. Its pathway is metabolic intermediate biosynthesis; chorismate biosynthesis; chorismate from D-erythrose 4-phosphate and phosphoenolpyruvate: step 2/7. In terms of biological role, catalyzes the conversion of 3-deoxy-D-arabino-heptulosonate 7-phosphate (DAHP) to dehydroquinate (DHQ). This Campylobacter jejuni subsp. jejuni serotype O:23/36 (strain 81-176) protein is 3-dehydroquinate synthase.